The following is a 70-amino-acid chain: uncharacterized protein (70 aa).

This is an uncharacterized protein from Treponema pallidum (strain Nichols).